The primary structure comprises 634 residues: 1-deoxy-D-xylulose-5-phosphate synthase (634 aa).

Thiamine diphosphate is bound by residues histidine 74 and 115-117 (AHS). Aspartate 146 contributes to the Mg(2+) binding site. Thiamine diphosphate-binding positions include 147-148 (GA), asparagine 176, tyrosine 283, and glutamate 365. Asparagine 176 provides a ligand contact to Mg(2+).

It belongs to the transketolase family. DXPS subfamily. In terms of assembly, homodimer. Requires Mg(2+) as cofactor. It depends on thiamine diphosphate as a cofactor.

The enzyme catalyses D-glyceraldehyde 3-phosphate + pyruvate + H(+) = 1-deoxy-D-xylulose 5-phosphate + CO2. The protein operates within metabolic intermediate biosynthesis; 1-deoxy-D-xylulose 5-phosphate biosynthesis; 1-deoxy-D-xylulose 5-phosphate from D-glyceraldehyde 3-phosphate and pyruvate: step 1/1. In terms of biological role, catalyzes the acyloin condensation reaction between C atoms 2 and 3 of pyruvate and glyceraldehyde 3-phosphate to yield 1-deoxy-D-xylulose-5-phosphate (DXP). In Burkholderia thailandensis (strain ATCC 700388 / DSM 13276 / CCUG 48851 / CIP 106301 / E264), this protein is 1-deoxy-D-xylulose-5-phosphate synthase.